Here is a 247-residue protein sequence, read N- to C-terminus: Transmembrane protein 33 (247 aa).

Residue A2 is modified to N-acetylalanine. Residues 2 to 31 (ADTTPNGPQGAGAVQFMMTNKLDTAMWLSR) lie on the Lumenal side of the membrane. A helical membrane pass occupies residues 32–52 (LFTVYCSALFVLPLLGLHEAA). Residues 53–100 (SFYQRALLANALTSALRLHQRLPHFQLSRAFLAQALLEDSCHYLLYSL) are Cytoplasmic-facing. The helical transmembrane segment at 101 to 121 (IFVNSYPVTMSIFPVLLFSLL) threads the bilayer. Residues 122-155 (HAATYTKKVLDAKGSNSLPLLRSFLDKLSTNQQN) are Lumenal-facing. Residues 156–176 (ILKFIACNEIFLMPATVFMLF) form a helical membrane-spanning segment. Residues 177 to 247 (SGQGSLLQPF…FISRLAPTVA (71 aa)) are Cytoplasmic-facing.

Belongs to the PER33/POM33 family. Interacts with EIF2AK3. Interacts with RTN1, RTN2, RTN3, RTN4 and ARL6IP1. Interacts with RNF5. Interacts with RNF26. Interacts with PKD2.

The protein localises to the endoplasmic reticulum membrane. The protein resides in the melanosome. It localises to the nucleus envelope. In terms of biological role, acts as a regulator of the tubular endoplasmic reticulum (ER) network by modulating intracellular calcium homeostasis. Mechanistically, stimulates PKD2 calcium-dependent activity. Suppresses the RTN3/4-induced formation of the ER tubules. Positively regulates PERK-mediated and IRE1-mediated unfolded protein response signaling. Plays an essential role in VEGF-mediated release of Ca(2+) from ER stores during angiogenesis. Also plays a role in the modulation of innate immune signaling through the cGAS-STING pathway by interacting with RNF26. Participates in lipid metabolism by acting as a downstream effector of the pyruvate kinase/PKM. Forms a complex with RNF5 to facilitate polyubiquitination and subsequent degradation of SCAP on the ER membrane. The polypeptide is Transmembrane protein 33 (Tmem33) (Mus musculus (Mouse)).